The sequence spans 102 residues: Small ribosomal subunit protein uS10 (102 aa).

Belongs to the universal ribosomal protein uS10 family. In terms of assembly, part of the 30S ribosomal subunit.

Functionally, involved in the binding of tRNA to the ribosomes. This is Small ribosomal subunit protein uS10 from Leptospira borgpetersenii serovar Hardjo-bovis (strain JB197).